The following is a 360-amino-acid chain: Phosphoserine aminotransferase (360 aa).

Arg-41 serves as a coordination point for L-glutamate. The pyridoxal 5'-phosphate site is built by Trp-101, Thr-152, Asp-172, and Gln-195. An N6-(pyridoxal phosphate)lysine modification is found at Lys-196. Position 237 to 238 (237 to 238) interacts with pyridoxal 5'-phosphate; it reads NT.

It belongs to the class-V pyridoxal-phosphate-dependent aminotransferase family. SerC subfamily. Homodimer. Pyridoxal 5'-phosphate serves as cofactor.

It localises to the cytoplasm. It carries out the reaction O-phospho-L-serine + 2-oxoglutarate = 3-phosphooxypyruvate + L-glutamate. The enzyme catalyses 4-(phosphooxy)-L-threonine + 2-oxoglutarate = (R)-3-hydroxy-2-oxo-4-phosphooxybutanoate + L-glutamate. Its pathway is amino-acid biosynthesis; L-serine biosynthesis; L-serine from 3-phospho-D-glycerate: step 2/3. It functions in the pathway cofactor biosynthesis; pyridoxine 5'-phosphate biosynthesis; pyridoxine 5'-phosphate from D-erythrose 4-phosphate: step 3/5. Functionally, catalyzes the reversible conversion of 3-phosphohydroxypyruvate to phosphoserine and of 3-hydroxy-2-oxo-4-phosphonooxybutanoate to phosphohydroxythreonine. This chain is Phosphoserine aminotransferase, found in Burkholderia orbicola (strain MC0-3).